A 271-amino-acid chain; its full sequence is 2-aminophenol 1,6-dioxygenase alpha subunit (271 aa).

The protein belongs to the LigB/MhpB extradiol dioxygenase family. As to quaternary structure, heterotetramer of 2 alpha and 2 beta subunits.

Functionally, component of the 2-aminophenol 1,6-dioxygenase complex that catalyzes the ring fission of 2-aminophenol to produce 2-aminomuconic 6-semialdehyde. AmnA seems to have a role in the stability of the complex. This is 2-aminophenol 1,6-dioxygenase alpha subunit (amnA) from Pseudomonas sp.